An 864-amino-acid polypeptide reads, in one-letter code: Translation initiation factor IF-2 (864 aa).

Positions Met-1–Ser-252 are disordered. A compositionally biased stretch (basic and acidic residues) spans Lys-78 to Asp-90. The segment covering Val-106–Pro-120 has biased composition (polar residues). Residues Arg-150–Gly-212 are compositionally biased toward gly residues. Over residues His-239–Ser-252 the composition is skewed to basic and acidic residues. The tr-type G domain maps to Asn-359–Lys-528. A G1 region spans residues Gly-368 to Thr-375. Residue Gly-368–Thr-375 coordinates GTP. The G2 stretch occupies residues Gly-393 to His-397. The segment at Asp-414–Gly-417 is G3. GTP is bound by residues Asp-414 to His-418 and Asn-468 to Asp-471. The segment at Asn-468–Asp-471 is G4. The G5 stretch occupies residues Ser-504–Arg-506.

The protein belongs to the TRAFAC class translation factor GTPase superfamily. Classic translation factor GTPase family. IF-2 subfamily.

The protein resides in the cytoplasm. Its function is as follows. One of the essential components for the initiation of protein synthesis. Protects formylmethionyl-tRNA from spontaneous hydrolysis and promotes its binding to the 30S ribosomal subunits. Also involved in the hydrolysis of GTP during the formation of the 70S ribosomal complex. The sequence is that of Translation initiation factor IF-2 from Leptospira borgpetersenii serovar Hardjo-bovis (strain L550).